Consider the following 721-residue polypeptide: 1,4-alpha-glucan branching enzyme GlgB (721 aa).

Asp400 (nucleophile) is an active-site residue. Residue Glu453 is the Proton donor of the active site.

Belongs to the glycosyl hydrolase 13 family. GlgB subfamily. Monomer.

The enzyme catalyses Transfers a segment of a (1-&gt;4)-alpha-D-glucan chain to a primary hydroxy group in a similar glucan chain.. It functions in the pathway glycan biosynthesis; glycogen biosynthesis. Its function is as follows. Catalyzes the formation of the alpha-1,6-glucosidic linkages in glycogen by scission of a 1,4-alpha-linked oligosaccharide from growing alpha-1,4-glucan chains and the subsequent attachment of the oligosaccharide to the alpha-1,6 position. The chain is 1,4-alpha-glucan branching enzyme GlgB from Chlamydia abortus (strain DSM 27085 / S26/3) (Chlamydophila abortus).